A 149-amino-acid chain; its full sequence is MNKGQRHIKIREIIMSHDIETQDELVDMLKKAGFNVTQATVSRDIKEMQLVKVPMANGRYKYSLPSDQRFNPVQKLKRALMDVFIKLDGAGNLLVLKTLPGNAHAIGVLLDNLDWNEIVGTICGDDTCLIICRTAEDAEKVSKQLLEML.

It belongs to the ArgR family.

The protein resides in the cytoplasm. The protein operates within amino-acid biosynthesis; L-arginine biosynthesis [regulation]. Functionally, regulates arginine biosynthesis genes. The chain is Arginine repressor from Geobacillus sp. (strain WCH70).